The primary structure comprises 66 residues: MAKGKDIRITVILECTSCDKKSVNKESRGISRYITQKNRHNTPSRLELRKFCPFCCKHTIHAEIKK.

This sequence belongs to the bacterial ribosomal protein bL33 family.

The protein localises to the plastid. It is found in the chloroplast. This is Large ribosomal subunit protein bL33c from Cicer arietinum (Chickpea).